Reading from the N-terminus, the 644-residue chain is Chaperone protein HtpG (644 aa).

Positions 1–352 (MNARVEQLEF…AQDMSLNVSR (352 aa)) are a; substrate-binding. The segment at 353–566 (EILQQDRQIK…AFGITPALAR (214 aa)) is b. The interval 567 to 644 (LYRASGQDIP…ILADRLARTL (78 aa)) is c.

This sequence belongs to the heat shock protein 90 family. As to quaternary structure, homodimer.

Its subcellular location is the cytoplasm. In terms of biological role, molecular chaperone. Has ATPase activity. The polypeptide is Chaperone protein HtpG (Mycobacterium avium (strain 104)).